A 472-amino-acid chain; its full sequence is 3-isopropylmalate dehydratase large subunit (472 aa).

[4Fe-4S] cluster is bound by residues Cys347, Cys407, and Cys410.

It belongs to the aconitase/IPM isomerase family. LeuC type 1 subfamily. Heterodimer of LeuC and LeuD. [4Fe-4S] cluster is required as a cofactor.

The enzyme catalyses (2R,3S)-3-isopropylmalate = (2S)-2-isopropylmalate. Its pathway is amino-acid biosynthesis; L-leucine biosynthesis; L-leucine from 3-methyl-2-oxobutanoate: step 2/4. In terms of biological role, catalyzes the isomerization between 2-isopropylmalate and 3-isopropylmalate, via the formation of 2-isopropylmaleate. This chain is 3-isopropylmalate dehydratase large subunit, found in Synechococcus sp. (strain CC9605).